The chain runs to 479 residues: Inhibitory synaptic factor 2A (479 aa).

A Phosphoserine modification is found at Ser177. 2 disordered regions span residues 226-247 (GRAKQDRGRPNSEEPAPPALRR) and 315-338 (SPECSEQPSQTHTPPGLGNQPSPT). Over residues 228-237 (AKQDRGRPNS) the composition is skewed to basic and acidic residues. The segment covering 318–337 (CSEQPSQTHTPPGLGNQPSP) has biased composition (polar residues). The stretch at 353–379 (TEVVDLKAQLQMMENLISSSQETIKVL) forms a coiled coil. The segment covering 449 to 461 (SPYSQETYSSTPK) has biased composition (polar residues). The disordered stretch occupies residues 449–472 (SPYSQETYSSTPKQKSKTESKKHG).

This sequence belongs to the INSYN2 family. In terms of assembly, interacts with GPHN.

The protein localises to the postsynaptic density. Component of the protein machinery at the inhibitory synapses, probably acting as a scaffold. Inhibitory synapses dampen neuronal activity through postsynaptic hyperpolarization. This synaptic inhibition is fundamental for the functioning of the central nervous system, shaping and orchestrating the flow of information through neuronal networks to generate a precise neural code. This chain is Inhibitory synaptic factor 2A, found in Homo sapiens (Human).